A 254-amino-acid polypeptide reads, in one-letter code: Type III pantothenate kinase (254 aa).

Residue 6–13 (DVGNTNIV) participates in ATP binding. Residues Phe100 and 107-110 (GADR) contribute to the substrate site. Asp109 serves as the catalytic Proton acceptor. Residue Asp129 coordinates K(+). Residue Thr132 participates in ATP binding. Thr184 is a substrate binding site.

It belongs to the type III pantothenate kinase family. As to quaternary structure, homodimer. Requires NH4(+) as cofactor. K(+) is required as a cofactor.

The protein resides in the cytoplasm. The catalysed reaction is (R)-pantothenate + ATP = (R)-4'-phosphopantothenate + ADP + H(+). It participates in cofactor biosynthesis; coenzyme A biosynthesis; CoA from (R)-pantothenate: step 1/5. Functionally, catalyzes the phosphorylation of pantothenate (Pan), the first step in CoA biosynthesis. This chain is Type III pantothenate kinase, found in Moorella thermoacetica (strain ATCC 39073 / JCM 9320).